Consider the following 150-residue polypeptide: Large ribosomal subunit protein bL9 (150 aa).

Belongs to the bacterial ribosomal protein bL9 family.

In terms of biological role, binds to the 23S rRNA. This Vibrio parahaemolyticus serotype O3:K6 (strain RIMD 2210633) protein is Large ribosomal subunit protein bL9.